Consider the following 451-residue polypeptide: POU domain, class 3, transcription factor 1 (451 aa).

Disordered stretches follow at residues 1 to 21 (MATTAQYLPRGPGGGAGGTGP), 69 to 114 (AHPQ…GFHA), 134 to 154 (AHHLGPAMSPSPGAGGGHQPQ), 186 to 253 (GLHH…PSSD), and 395 to 451 (KRMT…GSVQ). 3 stretches are compositionally biased toward gly residues: residues 11–20 (GPGGGAGGTG), 76–85 (TGGGGGGDWA), and 95–112 (AGGGSTGRADDGGGGGGF). The segment covering 134-145 (AHHLGPAMSPSP) has biased composition (low complexity). Over residues 190-199 (ALHEDGHEAQ) the composition is skewed to basic and acidic residues. Low complexity predominate over residues 220–232 (AGGLHAAAAHLHP). One can recognise a POU-specific domain in the interval 247–321 (EDAPSSDDLE…LLNKWLEETD (75 aa)). The segment at residues 339 to 398 (KRKKRTSIEVGVKGALESHFLKCPKPSAHEITGLADSLQLEKEVVRVWFCNRRQKEKRMT) is a DNA-binding region (homeobox). Residues 427–436 (PSAPPPPPPA) show a composition bias toward pro residues.

It belongs to the POU transcription factor family. Class-3 subfamily. As to expression, neural tissues and testis.

The protein localises to the nucleus. In terms of biological role, transcription factor that binds to the octamer motif (5'-ATTTGCAT-3'). Acts as a transcriptional activator when binding cooperatively with SOX4, SOX11, or SOX12 to gene promoters. Acts as a transcriptional repressor of myelin-specific genes. This chain is POU domain, class 3, transcription factor 1 (Pou3f1), found in Rattus norvegicus (Rat).